Here is a 466-residue protein sequence, read N- to C-terminus: Zinc metalloproteinase/disintegrin (466 aa).

The first 6 residues, 1–6 (FPYQGS), serve as a signal peptide directing secretion. A propeptide spanning residues 7-174 (SIILESGNVN…PIKKASQLIV (168 aa)) is cleaved from the precursor. The Peptidase M12B domain maps to 180–377 (RYMEIVIVVD…ENPPCILNKP (198 aa)). Ca(2+)-binding residues include Glu183 and Asp267. 3 cysteine pairs are disulfide-bonded: Cys291/Cys372, Cys331/Cys356, and Cys333/Cys339. His316 serves as a coordination point for Zn(2+). Glu317 is an active-site residue. 2 residues coordinate Zn(2+): His320 and His326. Positions 372 and 375 each coordinate Ca(2+). Positions 377-401 (PLRTDTVSTPVSGNELLEAGKDYDR) are excised as a propeptide. One can recognise a Disintegrin domain in the interval 385–466 (TPVSGNELLE…GDCPRNPYHA (82 aa)). Intrachain disulfides connect Cys422-Cys428, Cys427-Cys452, and Cys440-Cys459. Residues 444–446 (RGD) carry the Cell attachment site motif.

The protein belongs to the venom metalloproteinase (M12B) family. P-II subfamily. P-IIa sub-subfamily. In terms of assembly, monomer. Zn(2+) serves as cofactor. As to expression, expressed by the venom gland.

The protein localises to the secreted. Functionally, impairs hemostasis in the envenomed animal. Inhibits platelet aggregation induced by ADP, thrombin, platelet-activating factor and collagen. Acts by inhibiting fibrinogen interaction with platelet receptors GPIIb/GPIIIa (ITGA2B/ITGB3). In Deinagkistrodon acutus (Hundred-pace snake), this protein is Zinc metalloproteinase/disintegrin.